The sequence spans 249 residues: Uridylate kinase (249 aa).

An ATP-binding site is contributed by 15 to 18 (KLSG). Residues 23 to 28 (GDEGFG) form an involved in allosteric activation by GTP region. A UMP-binding site is contributed by G57. ATP is bound by residues G58 and R62. Residues D77 and 138 to 145 (TGNPFFTT) each bind UMP. ATP contacts are provided by T165, Y171, and D174.

Belongs to the UMP kinase family. As to quaternary structure, homohexamer.

It is found in the cytoplasm. It catalyses the reaction UMP + ATP = UDP + ADP. Its pathway is pyrimidine metabolism; CTP biosynthesis via de novo pathway; UDP from UMP (UMPK route): step 1/1. Allosterically activated by GTP. Inhibited by UTP. Functionally, catalyzes the reversible phosphorylation of UMP to UDP. The polypeptide is Uridylate kinase (Pseudoalteromonas translucida (strain TAC 125)).